Here is a 263-residue protein sequence, read N- to C-terminus: L-aspartate dehydrogenase (263 aa).

NAD(+) is bound by residues alanine 120 and asparagine 186. Histidine 216 is a catalytic residue.

This sequence belongs to the L-aspartate dehydrogenase family.

The enzyme catalyses L-aspartate + NADP(+) + H2O = oxaloacetate + NH4(+) + NADPH + H(+). It carries out the reaction L-aspartate + NAD(+) + H2O = oxaloacetate + NH4(+) + NADH + H(+). Its pathway is cofactor biosynthesis; NAD(+) biosynthesis; iminoaspartate from L-aspartate (dehydrogenase route): step 1/1. Its function is as follows. Specifically catalyzes the NAD or NADP-dependent dehydrogenation of L-aspartate to iminoaspartate. The polypeptide is L-aspartate dehydrogenase (Acinetobacter baumannii (strain AB307-0294)).